A 238-amino-acid chain; its full sequence is Ribonuclease PH (238 aa).

Phosphate contacts are provided by residues arginine 86 and 124–126 (GTR).

This sequence belongs to the RNase PH family. As to quaternary structure, homohexameric ring arranged as a trimer of dimers.

The catalysed reaction is tRNA(n+1) + phosphate = tRNA(n) + a ribonucleoside 5'-diphosphate. Its function is as follows. Phosphorolytic 3'-5' exoribonuclease that plays an important role in tRNA 3'-end maturation. Removes nucleotide residues following the 3'-CCA terminus of tRNAs; can also add nucleotides to the ends of RNA molecules by using nucleoside diphosphates as substrates, but this may not be physiologically important. Probably plays a role in initiation of 16S rRNA degradation (leading to ribosome degradation) during starvation. The sequence is that of Ribonuclease PH from Dichelobacter nodosus (strain VCS1703A).